The chain runs to 214 residues: Octanoyltransferase (214 aa).

In terms of domain architecture, BPL/LPL catalytic spans 29-214; it reads SETLDEIWVL…QHLQKQLIPS (186 aa). Substrate contacts are provided by residues 69-76, 146-148, and 159-161; these read RGGEITYH, ALG, and GLA. The Acyl-thioester intermediate role is filled by cysteine 177.

This sequence belongs to the LipB family.

The protein resides in the cytoplasm. The enzyme catalyses octanoyl-[ACP] + L-lysyl-[protein] = N(6)-octanoyl-L-lysyl-[protein] + holo-[ACP] + H(+). It participates in protein modification; protein lipoylation via endogenous pathway; protein N(6)-(lipoyl)lysine from octanoyl-[acyl-carrier-protein]: step 1/2. Catalyzes the transfer of endogenously produced octanoic acid from octanoyl-acyl-carrier-protein onto the lipoyl domains of lipoate-dependent enzymes. Lipoyl-ACP can also act as a substrate although octanoyl-ACP is likely to be the physiological substrate. This Polynucleobacter necessarius subsp. necessarius (strain STIR1) protein is Octanoyltransferase.